Consider the following 260-residue polypeptide: Methyl-coenzyme M reductase subunit gamma (260 aa).

R123 serves as a coordination point for coenzyme M.

This sequence belongs to the methyl-coenzyme M reductase gamma subunit family. MCR is a hexamer of two alpha, two beta, and two gamma chains, forming a dimer of heterotrimers. Coenzyme F430 is required as a cofactor.

It localises to the cytoplasm. It carries out the reaction coenzyme B + methyl-coenzyme M = methane + coenzyme M-coenzyme B heterodisulfide. The protein operates within one-carbon metabolism; methyl-coenzyme M reduction; methane from methyl-coenzyme M: step 1/1. In terms of biological role, component of the methyl-coenzyme M reductase (MCR) I that catalyzes the reductive cleavage of methyl-coenzyme M (CoM-S-CH3 or 2-(methylthio)ethanesulfonate) using coenzyme B (CoB or 7-mercaptoheptanoylthreonine phosphate) as reductant which results in the production of methane and the mixed heterodisulfide of CoB and CoM (CoM-S-S-CoB). This is the final step in methanogenesis. This Methanococcus vannielii protein is Methyl-coenzyme M reductase subunit gamma (mcrG).